Reading from the N-terminus, the 480-residue chain is Vinorine hydroxylase (480 aa).

The chain crosses the membrane as a helical span at residues 3-23; that stretch reads LLQILLAIAGLLAILLLQKQW. Cysteine 418 serves as a coordination point for heme.

The protein belongs to the cytochrome P450 family. Heme serves as cofactor. As to expression, mainly expressed in roots and, to a lesser extent, in leaves.

The protein resides in the membrane. The enzyme catalyses vinorine + reduced [NADPH--hemoprotein reductase] + O2 = vomilenine + oxidized [NADPH--hemoprotein reductase] + H2O + H(+). It catalyses the reaction vomilenine = perakine. The protein operates within alkaloid biosynthesis; ajmaline biosynthesis. A cytochrome P450 monooxygenase involved in the biosynthesis of ajmaline-type monoterpenoid indole alkaloids (MIAs) natural products, important plant-derived pharmaceuticals used in the therapy of heart disorders. Catalyzes the hydroxylation of vinorine to vomilenine, an intermediate chemical in the biosynthesis of ajmaline. Supports also vomilenine isomerization to perakine. The polypeptide is Vinorine hydroxylase (Rauvolfia serpentina (Serpentine wood)).